We begin with the raw amino-acid sequence, 321 residues long: Serine/threonine-protein phosphatase PP1 isozyme 4 (321 aa).

Alanine 2 is modified (N-acetylalanine). Aspartate 74, histidine 76, aspartate 102, and asparagine 134 together coordinate Mn(2+). Histidine 135 (proton donor) is an active-site residue. Histidine 183 and histidine 258 together coordinate Mn(2+).

Belongs to the PPP phosphatase family. PP-1 subfamily. As to quaternary structure, interacts with the DELLA proteins RGA and GAI. Interacts with PIF3 and PIF5. Interacts with the auxin efflux carrier PIN1. It depends on Mn(2+) as a cofactor. In terms of tissue distribution, expressed in the vasculature of roots and cotyledons, tips of leaves, guard cells, bases of trichomes, pistils and stamen filaments.

The protein resides in the nucleus. It is found in the cytoplasm. The enzyme catalyses O-phospho-L-seryl-[protein] + H2O = L-seryl-[protein] + phosphate. The catalysed reaction is O-phospho-L-threonyl-[protein] + H2O = L-threonyl-[protein] + phosphate. With respect to regulation, phosphatase activity is strongly reduced by the protein phosphatase inhibitor 2 (I-2). Serine/threonine-protein phosphatase that possesses phosphatase activity toward para-nitrophenyl phosphate (pNPP) in vitro. Acts as a positive regulator in the gibberellin (GA) signaling pathway to regulate plant growth and development. Promotes the GA-induced and proteasomal-dependent degradation of the DELLA proteins RGA and GAI by directly binding and dephosphorylating these proteins. Involved in the regulation of phytochrome B (phyB) signaling pathway that controls photomorphogenesis. Promotes the proteasomal-dependent degradation of PIF5 factor by directly binding and dephosphorylating this protein. Involved in the regulation of pavement cell (PC) interdigitation by modulating the auxin efflux carrier PIN1 polarity and endocytic trafficking. Regulates PIN1 polar targeting through direct binding and dephosphorylation. Acts antagonistically with PID in regulating PC development. This is Serine/threonine-protein phosphatase PP1 isozyme 4 from Arabidopsis thaliana (Mouse-ear cress).